The chain runs to 600 residues: MKKQLRSSFSTQGRRMAGARALWAANGMKKEQLGKPIIAIVNSFTQFVPGHVHLHEIGQLVKKEIEKLGCFAAEFNTIAIDDGIAMGHDGMLYSLPSRDIIADSVEYMVNAHKADAMVCISNCDKITPGMLMAAMRLNIPTVFVSGGPMEAGELDGQHLDLIDAMIKSADESVSDEEVSKIENRACPTCGCCSGMFTANSMNCLNEAIGLALPGNGTIVATHANRTQLFKDAAKQIVENTYKYYRDGDESVLPRSIATREAFLNAMTLDIAMGGSTNTVLHLLAIAHEAEADFKMDDIDMLSRKSPCLCKVAPNTQKYHIQDVNRAGGIMGIMGQLAKAGLIDTSVVRIDGMTLGEAIDKYDITSPNVCEEAIKKYKSAAAGKFNLVLGSQDVYYKELDTDRAEGCIRDIEHAYSKDGGLAVLKGNIAQDGCVVKTAGVDESIWKFTGPAKVFDSQEAACNGILGGKVVSGDVVVITHEGPKGGPGMQEMLYPTSYIKSRHLGKECALITDGRFSGGTSGLSIGHISPEAAAGGNIGKIKDGDIIEINIPERTINVRLTDEELAARPMTPVTRERYVTKSLKAYASMVSSADKGAVRLID.

Asp82 serves as a coordination point for Mg(2+). [2Fe-2S] cluster is bound at residue Cys123. The Mg(2+) site is built by Asp124 and Lys125. The residue at position 125 (Lys125) is an N6-carboxylysine. Residue Cys192 participates in [2Fe-2S] cluster binding. Glu489 serves as a coordination point for Mg(2+). Residue Ser515 is the Proton acceptor of the active site.

The protein belongs to the IlvD/Edd family. In terms of assembly, homodimer. [2Fe-2S] cluster is required as a cofactor. The cofactor is Mg(2+).

The catalysed reaction is (2R)-2,3-dihydroxy-3-methylbutanoate = 3-methyl-2-oxobutanoate + H2O. The enzyme catalyses (2R,3R)-2,3-dihydroxy-3-methylpentanoate = (S)-3-methyl-2-oxopentanoate + H2O. It functions in the pathway amino-acid biosynthesis; L-isoleucine biosynthesis; L-isoleucine from 2-oxobutanoate: step 3/4. It participates in amino-acid biosynthesis; L-valine biosynthesis; L-valine from pyruvate: step 3/4. Functionally, functions in the biosynthesis of branched-chain amino acids. Catalyzes the dehydration of (2R,3R)-2,3-dihydroxy-3-methylpentanoate (2,3-dihydroxy-3-methylvalerate) into 2-oxo-3-methylpentanoate (2-oxo-3-methylvalerate) and of (2R)-2,3-dihydroxy-3-methylbutanoate (2,3-dihydroxyisovalerate) into 2-oxo-3-methylbutanoate (2-oxoisovalerate), the penultimate precursor to L-isoleucine and L-valine, respectively. The protein is Dihydroxy-acid dehydratase of Bacteroides fragilis (strain YCH46).